The following is a 579-amino-acid chain: Golvesin (579 aa).

The tract at residues 1–75 (MTSVNEHSLL…NNNNNNNNNN (75 aa)) is required for targeting to the plasma membrane. A disordered region spans residues 1–79 (MTSVNEHSLL…NNNNNNSNTG (79 aa)). The Lumenal segment spans residues 1 to 94 (MTSVNEHSLL…KKKKWNFRKK (94 aa)). Low complexity predominate over residues 11–77 (INNNENNDNN…NNNNNNNNSN (67 aa)). The chain crosses the membrane as a helical; Signal-anchor for type III membrane protein span at residues 95-115 (ILPMIVILIITAIVVCLVVFS). The required for membrane targeting stretch occupies residues 95–118 (ILPMIVILIITAIVVCLVVFSLPF). The Cytoplasmic segment spans residues 116–578 (LPFDSSNTIY…SNDFVIAESP (463 aa)). Positions 559 to 579 (WPSSKGIPGFSNDFVIAESPE) are required for transfer to endosomes and contractile vacuoles; the protein is trapped in the Golgi.

The protein resides in the contractile vacuole membrane. Its subcellular location is the endosome membrane. The protein localises to the golgi apparatus membrane. The chain is Golvesin (gol) from Dictyostelium discoideum (Social amoeba).